The sequence spans 314 residues: Vacuolar membrane protein SCRG_03194 (314 aa).

The interval 32-60 (KPTSSVVSETSSKSLPSLTSSAFSTSSGA) is disordered. Residues 93–113 (VYIAVGAVIGAIFISILIWWL) traverse the membrane as a helical segment. 3 positions are modified to phosphoserine: serine 148, serine 254, and serine 274. Residues 240 to 309 (EERKLNLNRP…PSMFLDDVLN (70 aa)) are disordered. A compositionally biased stretch (basic and acidic residues) spans 254–269 (SPERKEKKINSMEGYH).

This sequence belongs to the PRM5 family.

The protein localises to the vacuole membrane. The polypeptide is Vacuolar membrane protein SCRG_03194 (Saccharomyces cerevisiae (strain RM11-1a) (Baker's yeast)).